A 683-amino-acid chain; its full sequence is MIVIMKAGFLFLASLCLLVQAVPNKVADKTYVTRQKNIYELFWHVDQPTVYHPELYQKARTFNLVENLDNYNDKEAVNEFMQLLKHGMLPRGQVFTMMNKEMRHQAVVLFRLLYSAKTFDVFYNTAVWARFNVNEQMYLYALSVAVIHRPDTKLMKLPPMYEVMPHLYFNDEVMQKAYNIAMGDTADMKKTYNNIDYYLLAANYTGWYLTKHNVPEQRLNYFTEDVGLNHFYFMLNHNYPPFMLSNSLNFPQIRGEFYFFLHKQVLNRYYLERLSNDMGEVSYVSLDHPIPTGYYPTMRFRNGLAFPQRETGATVPLHMQKYVQMIHDLHTRISTAIDLGYVVDSYGNHVKLYTKQGLNVLGNIVQGNGDSVNVQLYGQLDLLVRKVLGFGYESNVKYQVVPSALQMWSTSLRDPVFFSIYKTILDYYHKYKENLPKYTTEELNFPGVSIESVTVDKLITYFDHFESMLNNGVSIQSHAKAKNTMIKARQYRLNHKPFTYHIVVNSDKNVKGMVRIFLGPKYDEFGHEVDLVHNYMNFMQMDEFVVNLKSGSNTIERNSHESVFVVPDEVPSDVLYNRLVVSEDGSETFKYSSQPYGFPERLLLPKGKKEGMPYNVLVVVSPFDDSNVVQIDSPVWGRHIYDGRAMGFPLDKPVDPLLLVLSNIHVKEVLVHHREMEELNVAL.

The first 21 residues, 1-21, serve as a signal peptide directing secretion; sequence MIVIMKAGFLFLASLCLLVQA. Residues 32–153 enclose the Hemocyanin N-terminal domain; sequence VTRQKNIYEL…VAVIHRPDTK (122 aa). One can recognise a Hemocyanin middle domain in the interval 159–428; the sequence is PMYEVMPHLY…SIYKTILDYY (270 aa). A glycan (N-linked (GlcNAc...) asparagine) is linked at N203. The region spanning 437-673 is the Hemocyanin C-terminal domain; it reads KYTTEELNFP…IHVKEVLVHH (237 aa).

It belongs to the hemocyanin/hexamerin family. As to quaternary structure, probable homohexamer. As to expression, expressed in the fat body and secreted into the hemolymph (at protein level). Present in trophocytes and oenocytes of the fat body (at protein level).

It localises to the secreted. Its subcellular location is the nucleus. It is found in the cytoplasm. The protein resides in the cytoplasmic granule. Functionally, storage protein that may function as a nutrient supply to compensate for lack of dietary proteins during metamorphosis and egg production. The polypeptide is Hexamerin 70b (Apis mellifera (Honeybee)).